The following is a 318-amino-acid chain: Taste receptor type 2 member 60 (318 aa).

Residues M1 to V7 are Extracellular-facing. The helical transmembrane segment at L8–C28 threads the bilayer. At L29–A40 the chain is on the cytoplasmic side. A helical transmembrane segment spans residues A41–S61. Residues L62–P88 lie on the Extracellular side of the membrane. A helical transmembrane segment spans residues Y89–W109. At F110–P128 the chain is on the cytoplasmic side. Residues V129–V149 form a helical membrane-spanning segment. Residues G150–N183 lie on the Extracellular side of the membrane. Residue N179 is glycosylated (N-linked (GlcNAc...) asparagine). The helical transmembrane segment at S184–M204 threads the bilayer. Residues P205 to F234 are Cytoplasmic-facing. Residues R235–L255 form a helical membrane-spanning segment. At F256 to V264 the chain is on the extracellular side. A helical membrane pass occupies residues F265–I285. Residues Y286–P318 are Cytoplasmic-facing.

The protein belongs to the G-protein coupled receptor T2R family.

Its subcellular location is the membrane. Functionally, receptor that may play a role in the perception of bitterness and is gustducin-linked. May play a role in sensing the chemical composition of the gastrointestinal content. The activity of this receptor may stimulate alpha gustducin, mediate PLC-beta-2 activation and lead to the gating of TRPM5. The chain is Taste receptor type 2 member 60 (TAS2R60) from Pongo pygmaeus (Bornean orangutan).